Reading from the N-terminus, the 283-residue chain is Protein BASIC PENTACYSTEINE5 (283 aa).

An alanine-zipper region spans residues 51–86; the sequence is AVKERNEAVAATKEALASRDEALEQRDKALSERDNA. The stretch at 63-89 forms a coiled coil; it reads KEALASRDEALEQRDKALSERDNAIME. Positions 122 to 176 are disordered; sequence EESHLPNPSPISTIPPEAANTRPTKRKKESKQGKKMGEDLNRPVASPGKKSRKDW. Residues 151–162 are compositionally biased toward basic and acidic residues; that stretch reads SKQGKKMGEDLN.

Belongs to the BBR/BPC family. Homodimer. Heterodimer. Expressed in seedlings, leaves and pistils.

The protein resides in the nucleus. In terms of biological role, transcriptional regulator that specifically binds to GA-rich elements (GAGA-repeats) present in regulatory sequences of genes involved in developmental processes. The sequence is that of Protein BASIC PENTACYSTEINE5 (BPC5) from Arabidopsis thaliana (Mouse-ear cress).